A 435-amino-acid chain; its full sequence is ATP-dependent RNA helicase SUB2 (435 aa).

The segment at 1–40 (MSHEGQEELLDYSDSEEIAVPTTTAPSAAAGEGANDKEAD) is disordered. Residues 7-17 (EELLDYSDSEE) are compositionally biased toward acidic residues. The segment covering 19 to 33 (AVPTTTAPSAAAGEG) has biased composition (low complexity). A Q motif motif is present at residues 51 to 79 (TGFRDFLLKPELLRAIGDCGFEHPSEVQQ). One can recognise a Helicase ATP-binding domain in the interval 82–257 (IPQSILGTDV…KKFMQNPLEI (176 aa)). 95 to 102 (AKSGLGKT) is a binding site for ATP. The short motif at 204–207 (DECD) is the DECD box element. In terms of domain architecture, Helicase C-terminal spans 269–430 (GLQQYYIKLD…EFPEEGVDPS (162 aa)).

It belongs to the DEAD box helicase family. DECD subfamily.

The protein localises to the nucleus. The catalysed reaction is ATP + H2O = ADP + phosphate + H(+). Its function is as follows. ATP-binding RNA helicase involved in transcription elongation and required for the export of mRNA out of the nucleus. SUB2 also plays a role in pre-mRNA splicing and spliceosome assembly. May be involved in rDNA and telomeric silencing, and maintenance of genome integrity. This Debaryomyces hansenii (strain ATCC 36239 / CBS 767 / BCRC 21394 / JCM 1990 / NBRC 0083 / IGC 2968) (Yeast) protein is ATP-dependent RNA helicase SUB2 (SUB2).